The chain runs to 89 residues: Small ribosomal subunit protein uS19 (89 aa).

It belongs to the universal ribosomal protein uS19 family.

Functionally, protein S19 forms a complex with S13 that binds strongly to the 16S ribosomal RNA. This Bacteroides thetaiotaomicron (strain ATCC 29148 / DSM 2079 / JCM 5827 / CCUG 10774 / NCTC 10582 / VPI-5482 / E50) protein is Small ribosomal subunit protein uS19.